We begin with the raw amino-acid sequence, 159 residues long: Large ribosomal subunit protein uL10 (159 aa).

It belongs to the universal ribosomal protein uL10 family. As to quaternary structure, part of the ribosomal stalk of the 50S ribosomal subunit. The N-terminus interacts with L11 and the large rRNA to form the base of the stalk. The C-terminus forms an elongated spine to which L12 dimers bind in a sequential fashion forming a multimeric L10(L12)X complex.

Forms part of the ribosomal stalk, playing a central role in the interaction of the ribosome with GTP-bound translation factors. In Campylobacter jejuni subsp. jejuni serotype O:6 (strain 81116 / NCTC 11828), this protein is Large ribosomal subunit protein uL10.